The primary structure comprises 168 residues: Vasopressin-neurophysin 2-copeptin (168 aa).

Positions 1–23 are cleaved as a signal peptide; the sequence is MLARMLNTTLSACFLSLLAFSSA. A disulfide bridge connects residues C24 and C29. G32 is modified (glycine amide). Cystine bridges form between C45-C89, C48-C62, C56-C79, C63-C69, C96-C108, C102-C120, and C109-C114. An N-linked (GlcNAc...) asparagine glycan is attached at N135.

The protein belongs to the vasopressin/oxytocin family. Interacts with vasopressin receptors V1bR/AVPR1B (Ki=85 pM), V1aR/AVPR1A (Ki=0.6 nM) and V2R/AVPR2 (Ki=4.9 nM). Interacts with oxytocin receptor (OXTR) (Ki=110 nM).

Its subcellular location is the secreted. Neurophysin 2 specifically binds vasopressin. In terms of biological role, vasopressin has a direct antidiuretic action on the kidney, it also causes vasoconstriction of the peripheral vessels. Acts by binding to vasopressin receptors (V1bR/AVPR1B, V1aR/AVPR1A, and V2R/AVPR2). The protein is Vasopressin-neurophysin 2-copeptin (Avp) of Mus musculus (Mouse).